A 1536-amino-acid chain; its full sequence is MGMKRLIFLVFLLISFSLFGGYAYFSRYPVLHPDEGLSFVISDLENITLNVWKISEEDFLKAVFDPESFNFSLLEITRPIYSKKFSSEEWKEFSFPLKDRGFYFATLVSNEGTVFRRVIDRSLFIVTDLEAIYFSDSEKLRLHVFDSDGDFVEGAEVLLFEDSKLIDRVFTGKDGVVSITKHFDTFYIRYGDSRFFGGVYFSGGGLEREKLFFVTDRPIYKPSDTVHFRGQIFSFEEGLYKAFEKTKVTVSIFDTKKNEVYRSEFETDELGGFSGSMKLPDTASVGLYKVNVDHGGRRYYEYFLVEEYRKPEYKVEIETDKDVYISGEVVNYLVRVKYFNGQPVAKAQVAYYVRAFPEEGSGYLVYRGTDFTDEEGNLRLGVKTEEGFQGSYRLEVIVTDESQRQIEETRSVKVYADNVLISPLDRYVSTSPGKQVRVKVKVTDLSGNPLNGLLTTSSEDSTSTVAVENGEAIVTFTPKEPKSYRIELSFGKANTHFYVYAYCGAGTSSEFVINPATNTVKPGDELSVQILAPGKVMGVLGIVSNRVYDTIPVSFTGSVNLRVRIPKDIPEKNLFISFVGLDDNGRIYKLERLNVLLDTNFTTMKILFDKDQYEPGEMAQITIESNVDRVCLFLVDEAIYAMVGAEPPVLENFLYPYMNYPRTRGGFPHYWRLYVSRNSFRNKLASLPEEKTFADFKQNALPSKLNVREYFPDTALWIPSLKLHNGTARVSFKVPDSITSFRATAYGFSKDRFSQTESEMVVSKKFYLMPHLPSFLRESDVIKISATVFNRTSKTLPVQLTVELPENIELLEGSSSRHFLMEANSSHTETWTVKAVSASEGSFVKFVAVGEDLNDAVSMRLPVERFAFEREFYRIMLLDGKETLEIPGQFISSRIRFLDSIVPLVEDSLKRLIDFPYGCVEQTMSRFFPAVVAASAGIEVENLEEIIQRGLFKLYSYQHNDGGWGWFRFGESDDFMTCYVMEGLYFTMKAGYDVAESVLQRGIEYLRKHPSAYGSYVLDLYGVNHEPFKPESEADLVFLSLSSKEALKQLMNYVVQDEQKAYLNVYSNNPLISEIQLNSVFLRALAKWKEFPELERKVTNYLLLKKDSAFWTSTKDTSFVILALLEAMPEYASTTLKVINSENTFELKPGEERSLVPGSLTVSGKGIVEVEVVYIEVPKEAVSEGLEIKREFYKRYELLIEENKMIVDAFVPIGRGYVPRSIHPVEKEQTEELYILPYKYWKKTIEYRGVPLEINGAEVKIKGETYTFFRIETFNGLILVFFRNEALIYDTEKNTITRYLDVTDAGFMRSGPVFLMKGFVLVGDEKIPVPEDVTGLSCTMDEILLRGENKTYWYRNGEFVDLPFVARRVFFWDGKKLVAENIRFSGSSKTLRNRVFEVVFDVGDVKIELGDIIKTVVRVKGDGNYLIVEDFIPSCAQVLSNYREKGIEENKFSYSWYSSWNAWYSGREIRTDRVALFARYLYGNSFDYVWRATAEGVFHLLPARVYPMYSRGLYAHTDPDVLFIGADFIDGRDDQP.

An N-terminal signal peptide occupies residues 1–23; the sequence is MGMKRLIFLVFLLISFSLFGGYA. The isoglutamyl cysteine thioester (Cys-Gln) cross-link spans 919–922; sequence CVEQ.

This sequence belongs to the protease inhibitor I39 (alpha-2-macroglobulin) family. Bacterial alpha-2-macroglobulin subfamily.

Functionally, protects the bacterial cell from peptidases. The chain is Alpha-2-macroglobulin from Thermotoga maritima (strain ATCC 43589 / DSM 3109 / JCM 10099 / NBRC 100826 / MSB8).